Consider the following 233-residue polypeptide: Probable translation initiation factor, mitochondrial (233 aa).

The transit peptide at 1-39 directs the protein to the mitochondrion; sequence MNSYLQFPHRKLFIQFSYSLTSVFRKCQSRTFMNSQFAS.

It belongs to the IF-3 family.

It localises to the mitochondrion. Functionally, may be involved in mitochondrial translation initiation. The polypeptide is Probable translation initiation factor, mitochondrial (Schizosaccharomyces pombe (strain 972 / ATCC 24843) (Fission yeast)).